Consider the following 225-residue polypeptide: Chromosome partition protein MukE (225 aa).

A disordered region spans residues arginine 197–glutamate 225. The segment covering aspartate 212–glutamate 225 has biased composition (acidic residues).

Belongs to the MukE family. As to quaternary structure, interacts, and probably forms a ternary complex, with MukF and MukB. The complex formation is stimulated by calcium or magnesium.

The protein resides in the cytoplasm. The protein localises to the nucleoid. Involved in chromosome condensation, segregation and cell cycle progression. May participate in facilitating chromosome segregation by condensation DNA from both sides of a centrally located replisome during cell division. Probably acts via its interaction with MukB and MukF. The chain is Chromosome partition protein MukE from Salmonella typhi.